Reading from the N-terminus, the 75-residue chain is DNA-directed RNA polymerase subunit omega (75 aa).

This sequence belongs to the RNA polymerase subunit omega family. In terms of assembly, in cyanobacteria the RNAP catalytic core is composed of 2 alpha, 1 beta, 1 beta', 1 gamma and 1 omega subunit. When a sigma factor is associated with the core the holoenzyme is formed, which can initiate transcription.

The enzyme catalyses RNA(n) + a ribonucleoside 5'-triphosphate = RNA(n+1) + diphosphate. In terms of biological role, promotes RNA polymerase assembly. Latches the N- and C-terminal regions of the beta' subunit thereby facilitating its interaction with the beta and alpha subunits. This chain is DNA-directed RNA polymerase subunit omega, found in Cyanothece sp. (strain PCC 7425 / ATCC 29141).